Consider the following 240-residue polypeptide: Penton protein H240R (240 aa).

This sequence belongs to the asfivirus H240R family.

The protein resides in the virion. In terms of biological role, forms the penton at the fivefold vertices of the icosahedral capsid. Together with the minor capsid proteins (p17, p49, and M1249L), forms a complicated network immediately below the outer capsid shell, stabilizing the whole capsid. The sequence is that of Penton protein H240R from African swine fever virus (strain Badajoz 1971 Vero-adapted) (Ba71V).